The primary structure comprises 251 residues: Mediator of RNA polymerase II transcription subunit 7 (251 aa).

The segment at Met1–His38 is disordered. Residues Ala22–Ser32 are compositionally biased toward polar residues.

It belongs to the Mediator complex subunit 7 family. As to quaternary structure, component of the Mediator complex. Interacts with mdt-10 and mdt-21. Interacts with RNA polymerase II.

The protein localises to the nucleus. Component of the Mediator complex, a coactivator involved in the regulated transcription of nearly all RNA polymerase II-dependent genes. Mediator functions as a bridge to convey information from gene-specific regulatory proteins to the basal RNA polymerase II transcription machinery. Mediator is recruited to promoters by direct interactions with regulatory proteins and serves as a scaffold for the assembly of a functional preinitiation complex with RNA polymerase II and the general transcription factors. Required for germ cell development and gonadal growth. This Caenorhabditis elegans protein is Mediator of RNA polymerase II transcription subunit 7 (let-49).